The chain runs to 1433 residues: DNA-directed RNA polymerase subunit beta' (1433 aa).

Cysteine 66, cysteine 68, cysteine 81, and cysteine 84 together coordinate Zn(2+). Positions 473, 475, and 477 each coordinate Mg(2+). Zn(2+)-binding residues include cysteine 815, cysteine 889, cysteine 896, and cysteine 899.

Belongs to the RNA polymerase beta' chain family. As to quaternary structure, the RNAP catalytic core consists of 2 alpha, 1 beta, 1 beta' and 1 omega subunit. When a sigma factor is associated with the core the holoenzyme is formed, which can initiate transcription. The cofactor is Mg(2+). Zn(2+) serves as cofactor.

It carries out the reaction RNA(n) + a ribonucleoside 5'-triphosphate = RNA(n+1) + diphosphate. DNA-dependent RNA polymerase catalyzes the transcription of DNA into RNA using the four ribonucleoside triphosphates as substrates. This chain is DNA-directed RNA polymerase subunit beta', found in Porphyromonas gingivalis (strain ATCC BAA-308 / W83).